The following is a 455-amino-acid chain: MGQAAWKGFVLSLFDYKTAKFVVAKSKKVGLLYRVLQLTILLYLLIWVFLIKKSYQDIDTSLQSAVVTKVKGVAYTNTTMLGERLWDVADFVIPSQGENVFFVVTNLIVTPNQRQGICAEREGIPDGECSEDTDCHAGESVVAGHGLKTGRCLRVGNSTRGTCEIFAWCPVETKSMPTDPLLKDAEGFTIFIKNFIRFPKFNFSKANVLETGNKHFLKTCHFSSTNLYCPIFRLGSIVRWAGADFQDIALKGGVIGIHIEWDCDLDKAASHCNPHYYFNRLDNKHTQSISSGYNFRFARYYRDPHGVEFRDLMKAYGIRFDVIVNGKAGKFSIIPTVINIGSGLALMGAGAFFCDLVLIYLIRKSEFYRDKKFEKVRGQKEEDNVEVEANEMEQELPEDKPLERVHQDEQALELAQSGRKQNSNCQVLFEPARSGLQENAFVNMKPSQILQTVKT.

Over 1 to 30 (MGQAAWKGFVLSLFDYKTAKFVVAKSKKVG) the chain is Cytoplasmic. A helical transmembrane segment spans residues 31–50 (LLYRVLQLTILLYLLIWVFL). Residues 51 to 339 (IKKSYQDIDT…KFSIIPTVIN (289 aa)) are Extracellular-facing. 69 to 71 (KVK) provides a ligand contact to ATP. Residue Asn77 is glycosylated (N-linked (GlcNAc...) asparagine). 3 disulfide bridges follow: Cys118/Cys169, Cys129/Cys152, and Cys135/Cys163. N-linked (GlcNAc...) asparagine glycosylation is present at Asn157. Residue Thr189 participates in ATP binding. An N-linked (GlcNAc...) asparagine glycan is attached at Asn202. 2 disulfide bridges follow: Cys220/Cys229 and Cys263/Cys272. ATP-binding positions include 294–296 (NFR) and Lys314. The helical transmembrane segment at 340–362 (IGSGLALMGAGAFFCDLVLIYLI) threads the bilayer. The Cytoplasmic segment spans residues 363-455 (RKSEFYRDKK…PSQILQTVKT (93 aa)).

It belongs to the P2X receptor family. As to quaternary structure, functional P2XRs are organized as homomeric and heteromeric trimers. Homotrimer. Forms heterotrimer with P2RX1. In terms of tissue distribution, expressed in a number of tissues, with highest levels detected in heart and kidney.

It is found in the cell membrane. It catalyses the reaction Na(+)(in) = Na(+)(out). It carries out the reaction Ca(2+)(in) = Ca(2+)(out). The enzyme catalyses chloride(in) = chloride(out). Its activity is regulated as follows. Activated by ATP. Slowly desensitizing. Not activated by ATP agonist alpha/beta-methylene-ATP. Highly sensitive to the antagonists suramin and PPADS. In terms of biological role, ATP-gated nonselective transmembrane cation channel permeable to potassium, sodium and calcium. Unlike other P2RX receptors, the P2X5 receptor is also permeable to chloride. Acts as an important regulator of inflammatory-related bone loss and osteoclast multinucleation. In Mus musculus (Mouse), this protein is P2X purinoceptor 5.